The chain runs to 368 residues: N-acetylneuraminate epimerase (368 aa).

An N-terminal signal peptide occupies residues 1-19; sequence MNKTITALTIIMASFATNA. Kelch repeat units lie at residues 40-84, 86-137, 139-173, 174-219, 222-265, 287-336, and 338-367; these read TVYI…AFID, NLYV…FVHN, KAYV…KINA, HYFD…VNKG, TWLI…VAGG, ENYQ…PWNN, and LLII…VTVQ. The Proton acceptor role is filled by Glu-228.

Belongs to the NanM family. In terms of assembly, homodimer.

The protein resides in the periplasm. It catalyses the reaction N-acetyl-alpha-neuraminate = N-acetyl-beta-neuraminate. Converts alpha-N-acetylneuranimic acid (Neu5Ac) to the beta-anomer, accelerating the equilibrium between the alpha- and beta-anomers. Probably facilitates sialidase-negative bacteria to compete successfully for limited amounts of extracellular Neu5Ac, which is likely taken up in the beta-anomer. In addition, the rapid removal of sialic acid from solution might be advantageous to the bacterium to damp down host responses. The chain is N-acetylneuraminate epimerase from Escherichia coli O1:K1 / APEC.